The following is a 446-amino-acid chain: UDP-N-acetylmuramoylalanine--D-glutamate ligase (446 aa).

115–121 (GSNGKST) contacts ATP.

It belongs to the MurCDEF family.

It is found in the cytoplasm. The enzyme catalyses UDP-N-acetyl-alpha-D-muramoyl-L-alanine + D-glutamate + ATP = UDP-N-acetyl-alpha-D-muramoyl-L-alanyl-D-glutamate + ADP + phosphate + H(+). It functions in the pathway cell wall biogenesis; peptidoglycan biosynthesis. In terms of biological role, cell wall formation. Catalyzes the addition of glutamate to the nucleotide precursor UDP-N-acetylmuramoyl-L-alanine (UMA). The chain is UDP-N-acetylmuramoylalanine--D-glutamate ligase from Hahella chejuensis (strain KCTC 2396).